Reading from the N-terminus, the 1240-residue chain is DNA-directed RNA polymerase subunit beta (1240 aa).

This sequence belongs to the RNA polymerase beta chain family. As to quaternary structure, the RNAP catalytic core consists of 2 alpha, 1 beta, 1 beta' and 1 omega subunit. When a sigma factor is associated with the core the holoenzyme is formed, which can initiate transcription.

It catalyses the reaction RNA(n) + a ribonucleoside 5'-triphosphate = RNA(n+1) + diphosphate. DNA-dependent RNA polymerase catalyzes the transcription of DNA into RNA using the four ribonucleoside triphosphates as substrates. The chain is DNA-directed RNA polymerase subunit beta from Phytoplasma australiense.